The chain runs to 338 residues: Solute carrier family 35 member G5 (338 aa).

The interval 1 to 21 (MAGSHPYFNLPDSTHPSPPSA) is disordered. 9 helical membrane-spanning segments follow: residues 37-57 (TNGL…VGPL), 67-87 (LPSL…ALPL), 105-125 (CFCA…VQVV), 160-180 (CGLL…LWTL), 190-210 (ALGY…LLVY), 221-241 (TVAF…LFVL), 250-270 (LLSW…FTCV), 281-301 (LVCA…YYVL), and 305-325 (VAPF…IITA). Positions 49–174 (LPAGFVGPLS…SILGLIIIVG (126 aa)) constitute an EamA 1 domain. One can recognise an EamA 2 domain in the interval 272–325 (YAVTKAHPALVCAVLHSEVVVALILQYYVLHETVAPFDITGAGIVLGSIAIITA).

The protein belongs to the SLC35G solute transporter family.

The protein resides in the membrane. This is Solute carrier family 35 member G5 (SLC35G5) from Pan paniscus (Pygmy chimpanzee).